The chain runs to 216 residues: Protein YabP (216 aa).

The chain is Protein YabP (yabP) from Escherichia coli (strain K12).